The primary structure comprises 450 residues: Chromosomal replication initiator protein DnaA (450 aa).

A domain I, interacts with DnaA modulators region spans residues 1–84 (MTENEQIFWN…AVDYVYEDNL (84 aa)). The segment at 84–109 (LMIEQQHQGQQGYTEQAFQQLPAVQS) is domain II. The tract at residues 110–328 (DLNPKYSFDN…GALKDISLVA (219 aa)) is domain III, AAA+ region. Residues glycine 154, glycine 156, lysine 157, and threonine 158 each coordinate ATP. The interval 329-450 (NFKQIDTITV…EIETIKNKIK (122 aa)) is domain IV, binds dsDNA.

Belongs to the DnaA family. As to quaternary structure, oligomerizes as a right-handed, spiral filament on DNA at oriC.

The protein localises to the cytoplasm. Its function is as follows. Plays an essential role in the initiation and regulation of chromosomal replication. ATP-DnaA binds to the origin of replication (oriC) to initiate formation of the DNA replication initiation complex once per cell cycle. Binds the DnaA box (a 9 base pair repeat at the origin) and separates the double-stranded (ds)DNA. Forms a right-handed helical filament on oriC DNA; dsDNA binds to the exterior of the filament while single-stranded (ss)DNA is stabiized in the filament's interior. The ATP-DnaA-oriC complex binds and stabilizes one strand of the AT-rich DNA unwinding element (DUE), permitting loading of DNA polymerase. After initiation quickly degrades to an ADP-DnaA complex that is not apt for DNA replication. Binds acidic phospholipids. The protein is Chromosomal replication initiator protein DnaA of Streptococcus equi subsp. zooepidemicus (strain H70).